The following is a 188-amino-acid chain: MNIIRKLKPGTISLVLGPMFAGKTTFLIHCIYMLERLEKKVVFIKSTKNTRDKTIKTHSGIQLRPKQCKIIESTQLSDVGSLTDIHAVVIDEAHFFDDLIKCRTWADEEKIIILAGLNASFEQKMFPSIVRIFPYCSWVKYIGRTCMKCNRHNACFNVRKNADKTLILAGGSELYVTCCNNCLKKYIY.

Residue 17–24 (GPMFAGKT) participates in ATP binding. Catalysis depends on E92, which acts as the Proton acceptor. F121 serves as a coordination point for substrate. Residues C146 and C149 each contribute to the Zn(2+) site. Substrate is bound at residue 166-170 (LILAG). Zn(2+) contacts are provided by C179 and C182.

It belongs to the thymidine kinase family.

The catalysed reaction is thymidine + ATP = dTMP + ADP + H(+). Phosphorylates thymidine. ASFV replicates in the cytoplasm of infected cells and contains genes encoding a number of enzymes needed for DNA synthesis, including thymidine kinase. Important for growth in swine macrophages in vitro and is a virus virulence factor in swine. The protein is Thymidine kinase of African swine fever virus (isolate Tick/South Africa/Pretoriuskop Pr4/1996) (ASFV).